Consider the following 142-residue polypeptide: Transcription antitermination protein NusB (142 aa).

Belongs to the NusB family.

In terms of biological role, involved in transcription antitermination. Required for transcription of ribosomal RNA (rRNA) genes. Binds specifically to the boxA antiterminator sequence of the ribosomal RNA (rrn) operons. This is Transcription antitermination protein NusB from Trichlorobacter lovleyi (strain ATCC BAA-1151 / DSM 17278 / SZ) (Geobacter lovleyi).